The following is a 516-amino-acid chain: DNA-(apurinic or apyrimidinic site) endonuclease 2 (516 aa).

Asn-8 and Glu-47 together coordinate Mg(2+). The active site involves Tyr-155. 4 residues coordinate Mg(2+): Asp-196, Asn-198, Asp-302, and His-303. Asp-196 (proton donor/acceptor) is an active-site residue. Catalysis depends on His-303, which acts as the Proton acceptor. The span at Gln-357 to Arg-366 shows a compositional bias: polar residues. A disordered region spans residues Gln-357–Gln-389. Residues Gln-367–Gln-389 are compositionally biased toward basic residues. Lys-370 is covalently cross-linked (Glycyl lysine isopeptide (Lys-Gly) (interchain with G-Cter in ubiquitin)). Residues Gln-389 to Phe-396 are required for the interaction and colocalization with PCNA in nuclear foci in presence of oxidative-induced DNA damaging agents. 4 residues coordinate Zn(2+): Cys-467, His-470, Cys-493, and Cys-507. Residues Cys-467–Ser-516 form a GRF-type zinc finger.

Belongs to the DNA repair enzymes AP/ExoA family. In terms of assembly, interacts with PCNA. This interaction is increased by misincorporation of uracil in nuclear DNA. Mg(2+) serves as cofactor. Mn(2+) is required as a cofactor. Ubiquitinated by the CUL9-RBX1 complex. Ubiquitinated by MKRN3 at Lys-370 leading to proteasomal degradation. Expressed in lymphocytes, thymocytes and splenocytes (at protein level). Highly expressed in the thymus and weakly expressed in the bone marrow, spleen, eye, kidney, lung, brain and uterus.

The protein resides in the nucleus. The protein localises to the cytoplasm. It localises to the mitochondrion. The enzyme catalyses Exonucleolytic cleavage in the 3'- to 5'-direction to yield nucleoside 5'-phosphates.. Its activity is regulated as follows. 3'-5' exonuclease activity is activated by sodium and manganese. 3'-5' exonuclease and 3'-phosphodiesterase activities are stimulated in presence of PCNA. Its function is as follows. Functions as a weak apurinic/apyrimidinic (AP) endodeoxyribonuclease in the DNA base excision repair (BER) pathway of DNA lesions induced by oxidative and alkylating agents. Initiates repair of AP sites in DNA by catalyzing hydrolytic incision of the phosphodiester backbone immediately adjacent to the damage, generating a single-strand break with 5'-deoxyribose phosphate and 3'-hydroxyl ends. Also displays double-stranded DNA 3'-5' exonuclease, 3'-phosphodiesterase activities. Shows robust 3'-5' exonuclease activity on 3'-recessed heteroduplex DNA and is able to remove mismatched nucleotides preferentially. Shows fairly strong 3'-phosphodiesterase activity involved in the removal of 3'-damaged termini formed in DNA by oxidative agents. In the nucleus functions in the PCNA-dependent BER pathway. Plays a role in reversing blocked 3' DNA ends, problematic lesions that preclude DNA synthesis. Required for somatic hypermutation (SHM) and DNA cleavage step of class switch recombination (CSR) of immunoglobulin genes. Required for proper cell cycle progression during proliferation of peripheral lymphocytes. The polypeptide is DNA-(apurinic or apyrimidinic site) endonuclease 2 (Apex2) (Mus musculus (Mouse)).